The sequence spans 33 residues: Toxin BcV (33 aa).

Cysteines 6 and 30 form a disulfide.

Its subcellular location is the secreted. It localises to the nematocyst. Functionally, potently and reversibly blocks mammalian Kv11/KCNH/ERG voltage-gated potassium channels. Acts as a gating-modifier toxin that shifts the voltage-dependence of ERG activation in the positive direction and suppresses its current amplitudes elicited by strong depolarizing pulses that maximally activate the channels. The sequence is that of Toxin BcV from Bunodosoma caissarum (Sea anemone).